The chain runs to 246 residues: Triosephosphate isomerase (246 aa).

Residue 9-11 (NWK) coordinates substrate. The active-site Electrophile is H95. The Proton acceptor role is filled by E165. Residues G171, S210, and 231 to 232 (GG) each bind substrate.

Belongs to the triosephosphate isomerase family. As to quaternary structure, homodimer.

The protein localises to the cytoplasm. The enzyme catalyses D-glyceraldehyde 3-phosphate = dihydroxyacetone phosphate. The protein operates within carbohydrate biosynthesis; gluconeogenesis. It participates in carbohydrate degradation; glycolysis; D-glyceraldehyde 3-phosphate from glycerone phosphate: step 1/1. Functionally, involved in the gluconeogenesis. Catalyzes stereospecifically the conversion of dihydroxyacetone phosphate (DHAP) to D-glyceraldehyde-3-phosphate (G3P). In Thermodesulfovibrio yellowstonii (strain ATCC 51303 / DSM 11347 / YP87), this protein is Triosephosphate isomerase.